We begin with the raw amino-acid sequence, 130 residues long: Small ribosomal subunit protein uS8 (130 aa).

Belongs to the universal ribosomal protein uS8 family. As to quaternary structure, part of the 30S ribosomal subunit. Contacts proteins S5 and S12.

In terms of biological role, one of the primary rRNA binding proteins, it binds directly to 16S rRNA central domain where it helps coordinate assembly of the platform of the 30S subunit. In Vibrio parahaemolyticus serotype O3:K6 (strain RIMD 2210633), this protein is Small ribosomal subunit protein uS8.